A 230-amino-acid chain; its full sequence is MTSDDRIKLEPSWKNALRDEFEQPYMAQLREFLRQEHAAGKEIYPPGPLIFNALNSTPLDNVKVVILGQDPYHGPNQAHGLCFSVQPGVPTPPSLVNIYKELKRDLNIDIPNHGCLQSWADQGVLLLNTTLTVERANAASHAGKGWQHFTDRIIQVVSEHQPHLVFLLWGAHAQSKQKLVDATKHLVLTSVHPSPLSAYKGFLGNGHFGRANKYLEQNGIAPIDWRLPAL.

Residue D70 is the Proton acceptor of the active site.

The protein belongs to the uracil-DNA glycosylase (UDG) superfamily. UNG family.

It localises to the cytoplasm. It carries out the reaction Hydrolyzes single-stranded DNA or mismatched double-stranded DNA and polynucleotides, releasing free uracil.. Functionally, excises uracil residues from the DNA which can arise as a result of misincorporation of dUMP residues by DNA polymerase or due to deamination of cytosine. The sequence is that of Uracil-DNA glycosylase from Pseudomonas syringae pv. syringae (strain B728a).